Here is a 775-residue protein sequence, read N- to C-terminus: Suppressor of glycerol defect protein 1 (775 aa).

Basic residues-rich tracts occupy residues 1 to 11 (MRPIKKSRSLK) and 28 to 49 (RRGK…RISR). Disordered stretches follow at residues 1-101 (MRPI…LLDP) and 152-253 (IDDI…GGDK). 3 stretches are compositionally biased toward basic and acidic residues: residues 52 to 79 (NGYE…DAHR), 177 to 193 (TGDH…REGN), and 209 to 223 (DEFH…RMDP). In terms of domain architecture, MIF4G spans 262–463 (RRKLQGSLNK…ESITNLKENK (202 aa)). The region spanning 565–689 (TLRTSIFVAL…PLTILKHVDF (125 aa)) is the MI domain.

Belongs to the CWC22 family.

The protein localises to the nucleus. Its subcellular location is the nucleolus. Functionally, involved in osmoregulatory glycerol response. This Schizosaccharomyces pombe (strain 972 / ATCC 24843) (Fission yeast) protein is Suppressor of glycerol defect protein 1 (sgd1).